Here is a 142-residue protein sequence, read N- to C-terminus: 3-hydroxyacyl-[acyl-carrier-protein] dehydratase FabZ (142 aa).

Residue His48 is part of the active site.

It belongs to the thioester dehydratase family. FabZ subfamily.

Its subcellular location is the cytoplasm. It carries out the reaction a (3R)-hydroxyacyl-[ACP] = a (2E)-enoyl-[ACP] + H2O. Its function is as follows. Involved in unsaturated fatty acids biosynthesis. Catalyzes the dehydration of short chain beta-hydroxyacyl-ACPs and long chain saturated and unsaturated beta-hydroxyacyl-ACPs. The chain is 3-hydroxyacyl-[acyl-carrier-protein] dehydratase FabZ from Desulforamulus reducens (strain ATCC BAA-1160 / DSM 100696 / MI-1) (Desulfotomaculum reducens).